The following is a 489-amino-acid chain: Endoglucanase 4 (489 aa).

Residues 1-25 form the signal peptide; that stretch reads MAGKSFMTPAIMLAMLLLISPETYA. D81 functions as the Nucleophile in the catalytic mechanism. Residue H409 is part of the active site. A glycan (N-linked (GlcNAc...) asparagine) is linked at N453. Catalysis depends on residues D460 and E469.

The protein belongs to the glycosyl hydrolase 9 (cellulase E) family.

It localises to the secreted. The catalysed reaction is Endohydrolysis of (1-&gt;4)-beta-D-glucosidic linkages in cellulose, lichenin and cereal beta-D-glucans.. This is Endoglucanase 4 from Arabidopsis thaliana (Mouse-ear cress).